The sequence spans 66 residues: Metallothionein (66 aa).

At S1 the chain carries N-acetylserine. Cd(2+) contacts are provided by C9, C13, C18, C20, C24, C26, C30, C32, C35, C38, C40, C45, C47, C51, C57, C59, C63, and C65.

It belongs to the metallothionein superfamily. Type 2 family.

The metallothioneins are involved in the cellular sequestration of toxic metal ions and regulation of essential trace elements. The chain is Metallothionein from Arianta arbustorum (Land snail).